A 310-amino-acid chain; its full sequence is Zinc finger protein-like 1 (310 aa).

A B box-type; degenerate zinc finger spans residues 1 to 43; that stretch reads MGLCKCPKRKVTNLFCFEHRVNVCEHCLVANHAKCIVQSYLQW. The Cytoplasmic segment spans residues 1–266; the sequence is MGLCKCPKRK…RPLTLLQRAG (266 aa). Residues 53 to 101 form an RING-type; degenerate zinc finger; that stretch reads CRLCNIPLASRETTRLVCYDLFHWACLNERAAQLPRNTAPAGYQCPSCN. Residues 145–231 are disordered; that stretch reads PEPLNTSDFS…RTPGLHGDCD (87 aa). Residues 148–165 show a composition bias toward polar residues; that stretch reads LNTSDFSDWSSFNASSTP. Residues 213–224 are compositionally biased toward basic and acidic residues; the sequence is KVYDTRDDDRTP. A helical membrane pass occupies residues 267–287; it reads LLLLLGLLGFLALLALMSRLG. Over 288–310 the chain is Lumenal; sequence RAAADSDPNLDPLMNPHIRVGPS.

Belongs to the ZFPL1 family. In terms of assembly, interacts with GOLGA2/GM130. Post-translationally, phosphorylated. Expressed strongly in the exocrine pancreas.

The protein resides in the golgi apparatus. It localises to the cis-Golgi network membrane. Functionally, required for cis-Golgi integrity and efficient ER to Golgi transport. Involved in the maintenance of the integrity of the cis-Golgi, possibly via its interaction with GOLGA2/GM130. This is Zinc finger protein-like 1 (ZFPL1) from Homo sapiens (Human).